The primary structure comprises 198 residues: MFKVIQRSVGPASLSLLTFRVYAAPKKDSPHKSYMKIDELSLYSVPEGQSKYVEEPRTQLEENISQLRHHCEPYTSFCQEIYSHTKPKVDHFVQWGVDNYNYLQNAPPGFFPRLGVIGFAGFVGLLFARGSKIKKLVYPPFFMGLGASVYYPQQAITIAQITGEKLYDWGLRGYIVIEDLWKQNFQKPGNVKNSPGNK.

The N-terminal stretch at 1–23 (MFKVIQRSVGPASLSLLTFRVYA) is a signal peptide. An N-linked (GlcNAc...) asparagine glycan is attached at N63. Residues 108–128 (PGFFPRLGVIGFAGFVGLLFA) traverse the membrane as a helical segment.

It belongs to the apolipoprotein O/MICOS complex subunit Mic27 family. Component of the mitochondrial contact site and cristae organizing system (MICOS) complex, composed of at least MICOS10/MIC10, CHCHD3/MIC19, CHCHD6/MIC25, APOOL/MIC27, IMMT/MIC60, APOO/MIC23/MIC26 and MICOS13/MIC13. This complex was also known under the names MINOS or MitOS complex. The MICOS complex associates with mitochondrial outer membrane proteins SAMM50, MTX1 and MTX2 (together described as components of the mitochondrial outer membrane sorting assembly machinery (SAM) complex) and DNAJC11, mitochondrial inner membrane protein TMEM11 and with HSPA9. The MICOS and SAM complexes together with DNAJC11 are part of a large protein complex spanning both membranes termed the mitochondrial intermembrane space bridging (MIB) complex. Interacts with IMMT/MIC60. Interacts with MICOS10/MIC10 and APOOL/MIC27.

The protein localises to the mitochondrion inner membrane. It is found in the mitochondrion. It localises to the endoplasmic reticulum membrane. Its subcellular location is the golgi apparatus membrane. Component of the MICOS complex, a large protein complex of the mitochondrial inner membrane that plays crucial roles in the maintenance of crista junctions, inner membrane architecture, and formation of contact sites to the outer membrane. Plays a crucial role in crista junction formation and mitochondrial function. Can induce cardiac lipotoxicity by enhancing mitochondrial respiration and fatty acid metabolism in cardiac myoblasts. Promotes cholesterol efflux from macrophage cells. Detected in HDL, LDL and VLDL. Secreted by a microsomal triglyceride transfer protein (MTTP)-dependent mechanism, probably as a VLDL-associated protein that is subsequently transferred to HDL. The protein is MICOS complex subunit Mic26 (Apoo) of Mus musculus (Mouse).